Consider the following 237-residue polypeptide: LexA repressor (237 aa).

Residues 26–46 constitute a DNA-binding region (H-T-H motif); sequence FDEMKDALGLKSKSGIHRLIT. Catalysis depends on for autocatalytic cleavage activity residues S158 and K196.

This sequence belongs to the peptidase S24 family. In terms of assembly, homodimer.

It catalyses the reaction Hydrolysis of Ala-|-Gly bond in repressor LexA.. Functionally, represses a number of genes involved in the response to DNA damage (SOS response), including recA and lexA. In the presence of single-stranded DNA, RecA interacts with LexA causing an autocatalytic cleavage which disrupts the DNA-binding part of LexA, leading to derepression of the SOS regulon and eventually DNA repair. The polypeptide is LexA repressor (Rhodospirillum centenum (strain ATCC 51521 / SW)).